A 161-amino-acid polypeptide reads, in one-letter code: NADH:FMN oxidoreductase (161 aa).

FMN contacts are provided by residues D30, 37 to 40, 54 to 61, A88, R94, and F151; these read AAST and CVQNSSTT.

It belongs to the non-flavoprotein flavin reductase family.

It is found in the cytoplasm. The catalysed reaction is FMNH2 + NAD(+) = FMN + NADH + 2 H(+). The enzyme catalyses FADH2 + NAD(+) = FAD + NADH + 2 H(+). It functions in the pathway sulfur metabolism; dibenzothiophene degradation. Functionally, an NADH:FMN oxidoreductase which supplies reduced FMN for the '4S' desulfurization pathway that removes covalently bound sulfur from dibenzothiophene (DBT) without breaking carbon-carbon bonds. Can also use FAD. Provides DszC and probably also DszA (DBT-monooxygenase and DBTO2-monooxygenase respectively) with reduced flavin (FMN and/or FAD). This is NADH:FMN oxidoreductase from Mycolicibacterium goodii (Mycobacterium goodii).